Here is a 655-residue protein sequence, read N- to C-terminus: E3 ubiquitin-protein ligase TRIM32 (655 aa).

The RING-type zinc finger occupies 21 to 66; sequence CPICMESFTEEQLRPKLLHCGHTICRQCLEKLLASSINGVRCPFCS. Serine 56 bears the Phosphoserine; by CHEK2 mark. The segment at 96-139 adopts a B box-type; atypical zinc-finger fold; the sequence is VGLLMCRGCGRRLPRQFCRSCGVVLCEPCREADHQPPGHCTLPV. 4 residues coordinate Zn(2+): cysteine 101, cysteine 104, cysteine 124, and histidine 129. Residues 139–198 are a coiled coil; sequence VKEAAEERRRDFGEKLTRLRELTGELQRRKAALEGVSRDLQARYKAVLQEYGHEERRIQE. The interval 327–347 is disordered; sequence MDMSPEEVAPSPRASPAKQRS. 3 positions are modified to phosphoserine: serine 330, serine 337, and serine 341. NHL repeat units lie at residues 360 to 403, 417 to 460, 461 to 501, 564 to 607, and 608 to 648; these read LKKM…FNRK, DSFV…YTMD, GHCV…FTVD, GRQI…FPKG, and GGYS…YSYH.

Belongs to the TRIM/RBCC family. In terms of assembly, it self-associates. Interacts with DTNBP1. Interacts with PIAS4/PIASY upon treatment with UVB and TNF-alpha. Interacts with AMBRA1; promoting activation of ULK1 through unanchored 'Lys-63'-linked polyubiquitin chains. Interacts with TICAM1 and TAX1BP1; these interactions target TICAM1 to TAX1BP1-mediated selective autophagic degradation. Ubiquitinated. In terms of processing, phosphorylation at Ser-56 by CHEK2 under oxidative stress, activates the E3 ligase activity and promotes ATG7 ubiquitination leading to positive regulation of the autophagosme assembly. As to expression, ubiquitous. High expression in brain.

The protein localises to the cytoplasm. The catalysed reaction is S-ubiquitinyl-[E2 ubiquitin-conjugating enzyme]-L-cysteine + [acceptor protein]-L-lysine = [E2 ubiquitin-conjugating enzyme]-L-cysteine + N(6)-ubiquitinyl-[acceptor protein]-L-lysine.. It participates in protein modification; protein ubiquitination. E3 ubiquitin ligase that plays a role in various biological processes including neural stem cell differentiation, innate immunity, inflammatory resonse and autophagy. Plays a role in virus-triggered induction of IFN-beta and TNF-alpha by mediating the ubiquitination of STING1. Mechanistically, targets STING1 for 'Lys-63'-linked ubiquitination which promotes the interaction of STING1 with TBK1. Regulates bacterial clearance and promotes autophagy in Mycobacterium tuberculosis-infected macrophages. Negatively regulates TLR3/4-mediated innate immune and inflammatory response by triggering the autophagic degradation of TICAM1 in an E3 activity-independent manner. Plays an essential role in oxidative stress induced cell death by inducing loss of transmembrane potential and enhancing mitochondrial reactive oxygen species (ROS) production during oxidative stress conditions. Ubiquitinates XIAP and targets it for proteasomal degradation. Ubiquitinates DTNBP1 (dysbindin) and promotes its degradation. May ubiquitinate BBS2. Ubiquitinates PIAS4/PIASY and promotes its degradation in keratinocytes treated with UVB and TNF-alpha. Also acts as a regulator of autophagy by mediating formation of unanchored 'Lys-63'-linked polyubiquitin chains that activate ULK1: interaction with AMBRA1 is required for ULK1 activation. Positively regulates dendritic branching by promoting ubiquitination and subsequent degradation of the epigenetic factor CDYL. Under metabolic stress and phosphorylation by CHK2, mediates 'Lys-63'-linked ubiquitination of ATG7 at 'Lys-41' to initiate autophagy. The sequence is that of E3 ubiquitin-protein ligase TRIM32 from Mus musculus (Mouse).